A 117-amino-acid chain; its full sequence is Large ribosomal subunit protein uL18 (117 aa).

This sequence belongs to the universal ribosomal protein uL18 family. In terms of assembly, part of the 50S ribosomal subunit; part of the 5S rRNA/L5/L18/L25 subcomplex. Contacts the 5S and 23S rRNAs.

Functionally, this is one of the proteins that bind and probably mediate the attachment of the 5S RNA into the large ribosomal subunit, where it forms part of the central protuberance. The chain is Large ribosomal subunit protein uL18 from Onion yellows phytoplasma (strain OY-M).